The chain runs to 309 residues: Homoserine O-succinyltransferase (309 aa).

Residue C142 is the Acyl-thioester intermediate of the active site. Substrate contacts are provided by K163 and S192. H235 acts as the Proton acceptor in catalysis. E237 is an active-site residue. A substrate-binding site is contributed by R249.

The protein belongs to the MetA family. As to quaternary structure, homodimer.

It localises to the cytoplasm. The enzyme catalyses L-homoserine + succinyl-CoA = O-succinyl-L-homoserine + CoA. The protein operates within amino-acid biosynthesis; L-methionine biosynthesis via de novo pathway; O-succinyl-L-homoserine from L-homoserine: step 1/1. Transfers a succinyl group from succinyl-CoA to L-homoserine, forming succinyl-L-homoserine. This chain is Homoserine O-succinyltransferase, found in Escherichia coli O17:K52:H18 (strain UMN026 / ExPEC).